Here is a 408-residue protein sequence, read N- to C-terminus: MIFDKSLLGFIGICCLPPILLLIYLPNVSLQWIIVQSGFFSFGAGLLTYKLIPSVADLTSQANLTGMDLNKKGDPKFSGKKIPESLGICVAVVYLVCVILFQTFQWFSFPETIQLSEYNAALTSICFMILLGFGDDVLNLRWRYKLILPMFASLPLLVAYAGGTTVVVPDINFPVPLREWLGVVFDLGIFYRIYLLMLAIFCTNSINILAGINGLEVGQSVVIATSIIIHNLIELTIASSVPSSSSFSSSALSSVSPHLFSLILMIPFLFTTISLLFYNWYPSRVFVGDTYTYFSGMCFAVVAILCHFSKTLLLFFIPQILNFLYSVPQLFGIIPCPRHRVPKFNPETGKMEAIPTNLTIINLLLMITGPLTERQLCVYLLIFQGLCSCVGFGIRYHHLHHNPTLIFI.

A run of 2 helical transmembrane segments spans residues 6–26 (SLLG…IYLP) and 32–52 (WIIV…YKLI). Positions 68 and 84 each coordinate UDP-N-acetyl-alpha-D-glucosamine. Helical transmembrane passes span 87-107 (GICV…FQWF) and 120-140 (AALT…VLNL). Lys145 contacts dolichyl phosphate. The next 2 membrane-spanning stretches (helical) occupy residues 147 to 167 (ILPM…TTVV) and 181 to 201 (LGVV…LAIF). 200–208 (IFCTNSINI) contacts dolichyl phosphate. Asn207 provides a ligand contact to Mg(2+). Residue Asn213 coordinates UDP-N-acetyl-alpha-D-glucosamine. 2 helical membrane passes run 221-241 (VVIA…ASSV) and 258-278 (HLFS…LLFY). Mg(2+) is bound at residue Asp289. The helical transmembrane segment at 297-317 (MCFAVVAILCHFSKTLLLFFI) threads the bilayer. UDP-N-acetyl-alpha-D-glucosamine is bound at residue 338 to 340 (RHR). 2 consecutive transmembrane segments (helical) span residues 351–371 (MEAI…TGPL) and 376–396 (LCVY…GIRY).

This sequence belongs to the glycosyltransferase 4 family. As to quaternary structure, homodimer. The cofactor is Mg(2+).

The protein resides in the endoplasmic reticulum membrane. The catalysed reaction is a di-trans,poly-cis-dolichyl phosphate + UDP-N-acetyl-alpha-D-glucosamine = an N-acetyl-alpha-D-glucosaminyl-diphospho-di-trans,poly-cis-dolichol + UMP. The protein operates within protein modification; protein glycosylation. Its activity is regulated as follows. Inhibited by natural nucleoside antibiotic tunicamycin, which acts as a structural analog and competitor of UDP-GlcNAc. Its function is as follows. UDP-N-acetylglucosamine--dolichyl-phosphate N-acetylglucosaminephosphotransferase that operates in the biosynthetic pathway of dolichol-linked oligosaccharides, the glycan precursors employed in protein asparagine (N)-glycosylation. The assembly of dolichol-linked oligosaccharides begins on the cytosolic side of the endoplasmic reticulum membrane and finishes in its lumen. The sequential addition of sugars to dolichol pyrophosphate produces dolichol-linked oligosaccharides containing fourteen sugars, including two GlcNAcs, nine mannoses and three glucoses. Once assembled, the oligosaccharide is transferred from the lipid to nascent proteins by oligosaccharyltransferases. Catalyzes the initial step of dolichol-linked oligosaccharide biosynthesis, transfering GlcNAc-1-P from cytosolic UDP-GlcNAc onto the carrier lipid dolichyl phosphate (P-dolichol), yielding GlcNAc-P-P-dolichol embedded in the cytoplasmic leaflet of the endoplasmic reticulum membrane. In Dictyostelium discoideum (Social amoeba), this protein is UDP-N-acetylglucosamine--dolichyl-phosphate N-acetylglucosaminephosphotransferase (alg7).